A 129-amino-acid polypeptide reads, in one-letter code: Glycine cleavage system H protein (129 aa).

The Lipoyl-binding domain maps to 24 to 106; the sequence is LVRVGISAFA…HGEGWLLVVR (83 aa). The residue at position 65 (Lys65) is an N6-lipoyllysine.

Belongs to the GcvH family. In terms of assembly, the glycine cleavage system is composed of four proteins: P, T, L and H. Requires (R)-lipoate as cofactor.

Functionally, the glycine cleavage system catalyzes the degradation of glycine. The H protein shuttles the methylamine group of glycine from the P protein to the T protein. The polypeptide is Glycine cleavage system H protein (Prochlorococcus marinus (strain MIT 9303)).